The following is a 490-amino-acid chain: 4-hydroxybutyryl-CoA dehydratase/vinylacetyl-CoA-Delta-isomerase (490 aa).

C99 and C103 together coordinate [4Fe-4S] cluster. Residues 149-156 and 188-190 contribute to the FAD site; these read MTDPKGDR and HQT. Residues H292 and C299 each contribute to the [4Fe-4S] cluster site. Residues H325 and 386–390 contribute to the FAD site; that span reads DIAGG.

In terms of assembly, homotetramer. FAD serves as cofactor. Requires [4Fe-4S] cluster as cofactor.

The catalysed reaction is 4-hydroxybutanoyl-CoA = (2E)-butenoyl-CoA + H2O. The enzyme catalyses vinylacetyl-CoA = (2E)-butenoyl-CoA. In terms of biological role, catalyzes the reversible conversion of 4-hydroxybutyryl-CoA to crotonyl-CoA. The mechanism of the reaction seems to go through three steps: (1) the FAD-dependent oxidation of 4-hydroxybutyryl-CoA to 4-hydroxycrotonyl-CoA; (2) the hydroxyl group is substituted by a hydride derived from the now reduced FAD in an SN2' reaction leading to vinylacetyl-CoA; (3) isomerization to yield crotonyl-CoA. This chain is 4-hydroxybutyryl-CoA dehydratase/vinylacetyl-CoA-Delta-isomerase (abfD), found in Clostridium aminobutyricum.